The following is a 269-amino-acid chain: Protein OPG079 (269 aa).

The protein belongs to the orthopoxvirus OPG079 family. In terms of assembly, homoomultimer (Potential). Interacts with the small subunit of ribonucleotide reductase.

It is found in the host cytoplasm. Functionally, plays an essential role in viral DNA replication. Binds to ssDNA with high affinity and localizes to cytoplasmic factories where nascent viral genomes accumulate. May disrupt loops, hairpins and other secondary structures present on ssDNA to reduce and eliminate pausing of viral DNA polymerase at specific sites during elongation. In Cynomys gunnisoni (Gunnison's prairie dog), this protein is Protein OPG079 (OPG079).